A 270-amino-acid chain; its full sequence is Flavin-dependent thymidylate synthase (270 aa).

The ThyX domain maps to 13-218 (GFVRLVDQMG…PLAWAAFEEH (206 aa)). FAD-binding positions include Ser59, 82 to 84 (RHR), and Glu90. Residues 79–82 (QWFR), 90–94 (EISGR), and Arg157 contribute to the dUMP site. Residues 82–92 (RHRTASVNEIS) carry the ThyX motif motif. Residues 173-175 (DLH) and His179 each bind FAD. A dUMP-binding site is contributed by Arg184. Arg184 (involved in ionization of N3 of dUMP, leading to its activation) is an active-site residue.

Belongs to the thymidylate synthase ThyX family. Homotetramer. The cofactor is FAD.

The catalysed reaction is dUMP + (6R)-5,10-methylene-5,6,7,8-tetrahydrofolate + NADPH + H(+) = dTMP + (6S)-5,6,7,8-tetrahydrofolate + NADP(+). It participates in pyrimidine metabolism; dTTP biosynthesis. Catalyzes the reductive methylation of 2'-deoxyuridine-5'-monophosphate (dUMP) to 2'-deoxythymidine-5'-monophosphate (dTMP) while utilizing 5,10-methylenetetrahydrofolate (mTHF) as the methyl donor, and NADPH and FADH(2) as the reductant. The protein is Flavin-dependent thymidylate synthase of Thermus thermophilus (strain ATCC 27634 / DSM 579 / HB8).